Reading from the N-terminus, the 730-residue chain is Matrix metalloproteinase-9 (730 aa).

The N-terminal stretch at 1–19 (MSPWQPLLLALLAFGCSSA) is a signal peptide. A propeptide spans 20 to 107 (APYQRQPTFV…PRCGVPDVGR (88 aa)) (activation peptide). An N-linked (GlcNAc...) asparagine glycan is attached at N39. Positions 98-105 (PRCGVPDV) match the Cysteine switch motif. C100 is a Zn(2+) binding site. N-linked (GlcNAc...) asparagine glycans are attached at residues N120 and N127. Residues D131 and D165 each contribute to the Ca(2+) site. Zn(2+)-binding residues include H175 and D177. Ca(2+) is bound by residues D182, G183, D185, and L187. A Zn(2+)-binding site is contributed by H190. Residues G197, Q199, and D201 each contribute to the Ca(2+) site. H203 provides a ligand contact to Zn(2+). Ca(2+) contacts are provided by D205, D206, and E208. Fibronectin type-II domains follow at residues 225 to 273 (SNGA…FCPS), 283 to 331 (GEGK…FCPT), and 342 to 390 (SAGE…FCPD). 6 disulfide bridges follow: C230/C256, C244/C271, C288/C314, C302/C329, C347/C373, and C361/C388. Residue H401 participates in Zn(2+) binding. Residue E402 is part of the active site. The Zn(2+) site is built by H405 and H411. Residues 442–529 (LYGRGSKPDP…SEASTESLSP (88 aa)) are disordered. Residues 463-477 (PTAPPTMCPTIPPTA) show a composition bias toward pro residues. Over residues 478–489 (YPTVGPTVGPTG) the composition is skewed to low complexity. Residues 490–514 (APSPGPTSSPSPGPTGAPSPGPTAP) are compositionally biased toward pro residues. A disulfide bridge connects residues C534 and C729. Hemopexin repeat units follow at residues 536–581 (VDVF…WPAL), 582–626 (PATL…GLGP), 628–675 (VTHV…FSGV), and 676–729 (PWNS…LLQC).

The protein belongs to the peptidase M10A family. Exists as monomer or homodimer; disulfide-linked. Also exists as heterodimer with LCN2. Macrophages and transformed cell lines produce only the monomeric form. Interacts with ECM1. Zn(2+) serves as cofactor. It depends on Ca(2+) as a cofactor. N- and O-glycosylated.

The protein resides in the secreted. It is found in the extracellular space. It localises to the extracellular matrix. It catalyses the reaction Cleavage of gelatin types I and V and collagen types IV and V.. Inhibited by histatin-3 1/24 (histatin-5). Inhibited by ECM1. Its function is as follows. Matrix metalloproteinase that plays an essential role in local proteolysis of the extracellular matrix and in leukocyte migration. Could play a role in bone osteoclastic resorption. Cleaves KiSS1 at a Gly-|-Leu bond. Cleaves NINJ1 to generate the Secreted ninjurin-1 form. Cleaves type IV and type V collagen into large C-terminal three quarter fragments and shorter N-terminal one quarter fragments. Degrades fibronectin but not laminin or Pz-peptide. This is Matrix metalloproteinase-9 (Mmp9) from Mus musculus (Mouse).